A 178-amino-acid polypeptide reads, in one-letter code: ATP-dependent protease subunit HslV (178 aa).

T7 is a catalytic residue. G162, C165, and T168 together coordinate Na(+).

This sequence belongs to the peptidase T1B family. HslV subfamily. In terms of assembly, a double ring-shaped homohexamer of HslV is capped on each side by a ring-shaped HslU homohexamer. The assembly of the HslU/HslV complex is dependent on binding of ATP.

The protein localises to the cytoplasm. The enzyme catalyses ATP-dependent cleavage of peptide bonds with broad specificity.. With respect to regulation, allosterically activated by HslU binding. Protease subunit of a proteasome-like degradation complex believed to be a general protein degrading machinery. This chain is ATP-dependent protease subunit HslV, found in Ralstonia nicotianae (strain ATCC BAA-1114 / GMI1000) (Ralstonia solanacearum).